The following is a 284-amino-acid chain: Bifunctional protein FolD (284 aa).

Residues 165–167 (GRS) and Ser-190 each bind NADP(+).

It belongs to the tetrahydrofolate dehydrogenase/cyclohydrolase family. As to quaternary structure, homodimer.

It catalyses the reaction (6R)-5,10-methylene-5,6,7,8-tetrahydrofolate + NADP(+) = (6R)-5,10-methenyltetrahydrofolate + NADPH. It carries out the reaction (6R)-5,10-methenyltetrahydrofolate + H2O = (6R)-10-formyltetrahydrofolate + H(+). It functions in the pathway one-carbon metabolism; tetrahydrofolate interconversion. Its function is as follows. Catalyzes the oxidation of 5,10-methylenetetrahydrofolate to 5,10-methenyltetrahydrofolate and then the hydrolysis of 5,10-methenyltetrahydrofolate to 10-formyltetrahydrofolate. The polypeptide is Bifunctional protein FolD (Streptococcus pyogenes serotype M2 (strain MGAS10270)).